Consider the following 546-residue polypeptide: Chaperonin GroEL (546 aa).

Residues 30 to 33, Lys51, 87 to 91, Gly415, and Asp495 each bind ATP; these read TLGP and DGTTT.

Belongs to the chaperonin (HSP60) family. In terms of assembly, forms a cylinder of 14 subunits composed of two heptameric rings stacked back-to-back. Interacts with the co-chaperonin GroES.

The protein resides in the cytoplasm. The enzyme catalyses ATP + H2O + a folded polypeptide = ADP + phosphate + an unfolded polypeptide.. Its function is as follows. Together with its co-chaperonin GroES, plays an essential role in assisting protein folding. The GroEL-GroES system forms a nano-cage that allows encapsulation of the non-native substrate proteins and provides a physical environment optimized to promote and accelerate protein folding. The chain is Chaperonin GroEL from Alteromonas mediterranea (strain DSM 17117 / CIP 110805 / LMG 28347 / Deep ecotype).